The sequence spans 402 residues: Large ribosomal subunit protein uL3 (402 aa).

Positions 1–35 are disordered; it reads MSHRKFSAPRHGSMGFTPKKRSKRHRGKVKAFPKD. Residues 18–31 show a composition bias toward basic residues; it reads PKKRSKRHRGKVKA.

The protein belongs to the universal ribosomal protein uL3 family.

The protein localises to the cytoplasm. The L3 protein is a component of the large subunit of cytoplasmic ribosomes. The chain is Large ribosomal subunit protein uL3 (RPL3) from Toxocara canis (Canine roundworm).